A 664-amino-acid polypeptide reads, in one-letter code: DNA mismatch repair protein MutL (664 aa).

The disordered stretch occupies residues 382 to 447 (RKAGQEQQLQ…YGEPAPSKQQ (66 aa)). The segment covering 427–436 (RHTTSSNQSE) has biased composition (polar residues).

Belongs to the DNA mismatch repair MutL/HexB family.

Functionally, this protein is involved in the repair of mismatches in DNA. It is required for dam-dependent methyl-directed DNA mismatch repair. May act as a 'molecular matchmaker', a protein that promotes the formation of a stable complex between two or more DNA-binding proteins in an ATP-dependent manner without itself being part of a final effector complex. In Vibrio vulnificus (strain YJ016), this protein is DNA mismatch repair protein MutL.